We begin with the raw amino-acid sequence, 195 residues long: Calcineurin B homologous protein 1 (195 aa).

Residue glycine 2 is the site of N-myristoyl glycine attachment. EF-hand domains are found at residues 26–61, 66–101, 110–145, and 151–186; these read SQIT…AINP, IINA…KSKD, SRSN…MVGV, and QLGS…VDVE. Aspartate 123, aspartate 125, aspartate 127, lysine 129, glutamate 134, aspartate 164, aspartate 166, aspartate 168, and glutamate 175 together coordinate Ca(2+).

It belongs to the calcineurin regulatory subunit family. CHP subfamily. As to quaternary structure, monomer. Post-translationally, phosphorylated. In terms of processing, calcium-binding or N-myristoylation are necessary for the Na(+)/H(+) exchange activities.

Its subcellular location is the nucleus. The protein resides in the cytoplasm. It is found in the cytoskeleton. It localises to the endomembrane system. The protein localises to the endoplasmic reticulum-Golgi intermediate compartment. Its subcellular location is the endoplasmic reticulum. The protein resides in the cell membrane. It is found in the membrane. In terms of biological role, calcium-binding protein involved in different processes such as regulation of vesicular trafficking, plasma membrane Na(+)/H(+) exchanger and gene transcription. Involved in the constitutive exocytic membrane traffic. Mediates the association between microtubules and membrane-bound organelles of the endoplasmic reticulum and Golgi apparatus and is also required for the targeting and fusion of transcytotic vesicles (TCV) with the plasma membrane. Functions as an integral cofactor in cell pH regulation by controlling plasma membrane-type Na(+)/H(+) exchange activity. Inhibits serum- and GTPase-stimulated Na(+)/H(+) exchange. Plays a role as an inhibitor of ribosomal RNA transcription. Acts as a negative regulator of the calcineurin/NFAT signaling pathway. The polypeptide is Calcineurin B homologous protein 1 (CHP1) (Gallus gallus (Chicken)).